The primary structure comprises 140 residues: Protein ripply1 (140 aa).

The short motif at Trp-28–Trp-31 is the WRPW motif; required for gro2-binding element. Positions His-71 to Tyr-106 are ripply homology domain. Positions Asp-107 to Val-126 are disordered.

The protein belongs to the ripply family. Interacts with gro2 via the WRPW motif. As to expression, expressed in the embryonic anterior presomitic mesoderm and in newly formed somites.

Its subcellular location is the nucleus. Plays a role in somitogenesis. Essential for transcriptional repression of the segmental patterning genes, thus terminating the segmentation program in the presomitic mesoderm, and also required for the maintenance of rostrocaudal polarity in somites. This chain is Protein ripply1, found in Danio rerio (Zebrafish).